Reading from the N-terminus, the 458-residue chain is GDP-fucose protein O-fucosyltransferase 3 (458 aa).

The Cytoplasmic portion of the chain corresponds to 1 to 11; the sequence is MRRISVKKLCS. Residues 12-32 traverse the membrane as a helical; Signal-anchor for type II membrane protein segment; sequence FCLCACAFAFLVMTFQVIELL. Over 33–458 the chain is Lumenal; it reads GQFEQTEHRQ…TQFWREVFTD (426 aa). N-linked (GlcNAc...) asparagine glycosylation is found at Asn92, Asn150, and Asn300. Cysteines 371 and 374 form a disulfide. Asn445 carries an N-linked (GlcNAc...) asparagine glycan.

Belongs to the glycosyltransferase 10 family.

Its subcellular location is the endoplasmic reticulum membrane. It carries out the reaction L-threonyl-[protein] + GDP-beta-L-fucose = 3-O-(alpha-L-fucosyl)-L-threonyl-[protein] + GDP + H(+). The enzyme catalyses L-seryl-[protein] + GDP-beta-L-fucose = 3-O-(alpha-L-fucosyl)-L-seryl-[protein] + GDP + H(+). The protein operates within protein modification; protein glycosylation. Functionally, protein O-fucosyltransferase that specifically catalyzes O-fucosylation of serine or threonine residues in EMI domains of target proteins. Attaches fucose through an O-glycosidic linkage. O-fucosylation of EMI domain-containing proteins may be required for facilitating protein folding and secretion. In Danio rerio (Zebrafish), this protein is GDP-fucose protein O-fucosyltransferase 3 (fut10).